A 144-amino-acid chain; its full sequence is Large ribosomal subunit protein uL13 (144 aa).

The protein belongs to the universal ribosomal protein uL13 family. In terms of assembly, part of the 50S ribosomal subunit.

In terms of biological role, this protein is one of the early assembly proteins of the 50S ribosomal subunit, although it is not seen to bind rRNA by itself. It is important during the early stages of 50S assembly. The protein is Large ribosomal subunit protein uL13 of Lawsonia intracellularis (strain PHE/MN1-00).